A 142-amino-acid chain; its full sequence is Transcription antitermination protein NusB (142 aa).

It belongs to the NusB family.

Involved in transcription antitermination. Required for transcription of ribosomal RNA (rRNA) genes. Binds specifically to the boxA antiterminator sequence of the ribosomal RNA (rrn) operons. This Streptococcus mutans serotype c (strain ATCC 700610 / UA159) protein is Transcription antitermination protein NusB.